The primary structure comprises 683 residues: Rhophilin-2-B (683 aa).

An REM-1 domain is found at 25-99; the sequence is KSIAQTGRSK…LERLNISVEV (75 aa). The BRO1 domain maps to 110–501; it reads PLIPLGLKET…TDIFQRLGPL (392 aa). The PDZ domain maps to 515–592; sequence KMCITKEDGD…DSIEIQVISI (78 aa).

This sequence belongs to the RHPN family. In terms of assembly, interacts with RhoA.

It is found in the cytoplasm. The protein resides in the perinuclear region. In terms of biological role, binds specifically to GTP-Rho. The chain is Rhophilin-2-B (rhpn2-b) from Xenopus laevis (African clawed frog).